Here is a 249-residue protein sequence, read N- to C-terminus: tRNA pseudouridine synthase A (249 aa).

Aspartate 53 serves as the catalytic Nucleophile. Substrate is bound at residue tyrosine 111.

Belongs to the tRNA pseudouridine synthase TruA family. Homodimer.

It carries out the reaction uridine(38/39/40) in tRNA = pseudouridine(38/39/40) in tRNA. Formation of pseudouridine at positions 38, 39 and 40 in the anticodon stem and loop of transfer RNAs. The chain is tRNA pseudouridine synthase A from Streptococcus suis (strain 05ZYH33).